A 164-amino-acid polypeptide reads, in one-letter code: Low molecular weight protein-tyrosine-phosphatase (164 aa).

The active-site Nucleophile is the Cys-9. Residue Arg-15 is part of the active site. The active-site Proton donor is Asp-128.

This sequence belongs to the low molecular weight phosphotyrosine protein phosphatase family.

The enzyme catalyses O-phospho-L-tyrosyl-[protein] + H2O = L-tyrosyl-[protein] + phosphate. In terms of biological role, acts on tyrosine phosphorylated proteins, low-MW aryl phosphates and natural and synthetic acyl phosphates. May be involved in the regulation of sulfur amino acid metabolism. The polypeptide is Low molecular weight protein-tyrosine-phosphatase (ptpA) (Streptomyces coelicolor (strain ATCC BAA-471 / A3(2) / M145)).